Consider the following 119-residue polypeptide: Small ribosomal subunit protein uS13 (119 aa).

Basic residues predominate over residues 92–110 (RKDTCKRSTKKNARTRKGP). The tract at residues 92–119 (RKDTCKRSTKKNARTRKGPKKDNRWKER) is disordered.

It belongs to the universal ribosomal protein uS13 family. Part of the 30S ribosomal subunit. Forms a loose heterodimer with protein S19. Forms two bridges to the 50S subunit in the 70S ribosome.

In terms of biological role, located at the top of the head of the 30S subunit, it contacts several helices of the 16S rRNA. In the 70S ribosome it contacts the 23S rRNA (bridge B1a) and protein L5 of the 50S subunit (bridge B1b), connecting the 2 subunits; these bridges are implicated in subunit movement. Contacts the tRNAs in the A and P-sites. The sequence is that of Small ribosomal subunit protein uS13 from Mycoplasma sp.